Consider the following 150-residue polypeptide: Testis-expressed protein 22 (150 aa).

Residues 1-23 (MDSRKLSPRGKKLESHLSQEHRR) show a composition bias toward basic and acidic residues. Residues 1-26 (MDSRKLSPRGKKLESHLSQEHRRPPL) are disordered.

The protein resides in the cytoplasm. The protein localises to the cytoplasmic vesicle. Its subcellular location is the secretory vesicle. It is found in the acrosome. The chain is Testis-expressed protein 22 (TEX22) from Homo sapiens (Human).